The sequence spans 102 residues: NADH-quinone oxidoreductase subunit K (102 aa).

The next 3 helical transmembrane spans lie at 5-25, 31-51, and 66-86; these read IAHY…GIFL, IIIL…FIAF, and FVLT…VVFF.

Belongs to the complex I subunit 4L family. NDH-1 is composed of 14 different subunits. Subunits NuoA, H, J, K, L, M, N constitute the membrane sector of the complex.

The protein localises to the cell inner membrane. It catalyses the reaction a quinone + NADH + 5 H(+)(in) = a quinol + NAD(+) + 4 H(+)(out). Its function is as follows. NDH-1 shuttles electrons from NADH, via FMN and iron-sulfur (Fe-S) centers, to quinones in the respiratory chain. The immediate electron acceptor for the enzyme in this species is believed to be ubiquinone. Couples the redox reaction to proton translocation (for every two electrons transferred, four hydrogen ions are translocated across the cytoplasmic membrane), and thus conserves the redox energy in a proton gradient. The protein is NADH-quinone oxidoreductase subunit K of Chelativorans sp. (strain BNC1).